A 661-amino-acid chain; its full sequence is MLYPQDFDVIVVGGGHAGTEAALAAARMGSRTLLLTHNIETLGQMSCNPSIGGIGKGHLVKEVDALGGAMALATDEAGIQFRILNSSKGPAVRATRAQADRILYKAAIRRMLENQPNLWLFQQAVDDLMVEGDRVVGAVTQVGIRFRSRAVVLTAGTFLDGKIHVGLNNYAAGRAGDPPAVSLSARLKELQLPQGRLKTGTPPRIDGRSIDFSQCEEQPGDGMPGGVNEGQVPVFSFMAHAYGGAAMHPRQVPCWITHTNARTHEIIRSGFDRSPMFTGKIEGVGPRYCPSVEDKINRFADKESHQIFLEPEGLTTHEFYPNGISTSLPFDIQYDLVRSMHGLENAHILRPGYAIEYDYFDPRSLKSSFETRQIQGLFFAGQINGTTGYEEAAAQGLFAGINAALQCRGVGAWVPARDEAYLGVLVDDLITKGVTEPYRMFTSRAEFRLQLREDNADMRLTEAGRRMGLVDDARWDAFSRKRDAVSRETERLKSTWVNPRNLPTVEAERVLGKAIEHEYNLFDLLRRPDVGYDALTTMDGGKYASEAVSRETLGELSASVIEQVEIAAKYAGYIDRQRDEVQRAAHFEKLRLPEDLDYMQVAALSIEVRQKLQKHRPETLGQASRISGVTPAAISLLMVHLKKGGFKGFAPQPADGVETVA.

FAD is bound at residue 13–18; the sequence is GGGHAG. An NAD(+)-binding site is contributed by 285–299; the sequence is GPRYCPSVEDKINRF.

It belongs to the MnmG family. Homodimer. Heterotetramer of two MnmE and two MnmG subunits. FAD is required as a cofactor.

It localises to the cytoplasm. NAD-binding protein involved in the addition of a carboxymethylaminomethyl (cmnm) group at the wobble position (U34) of certain tRNAs, forming tRNA-cmnm(5)s(2)U34. The sequence is that of tRNA uridine 5-carboxymethylaminomethyl modification enzyme MnmG from Acidovorax sp. (strain JS42).